The primary structure comprises 427 residues: Succinate--CoA ligase [ADP-forming] subunit beta, mitochondrial (427 aa).

The N-terminal 30 residues, 1–30 (MYSRKSLSLISKCGQLSRLNAQAALQARRH), are a transit peptide targeting the mitochondrion. Residues 39-284 (AQLLREYGIG…LSQEDPDEVK (246 aa)) form the ATP-grasp domain. Residues Lys-76 and 83 to 85 (GRG) contribute to the ATP site. Ser-102 bears the Phosphoserine mark. Position 144 (Glu-144) interacts with ATP. The Mg(2+) site is built by Asn-236 and Asp-253. 2 positions are modified to phosphoserine: Ser-263 and Ser-276. Substrate contacts are provided by residues Asn-304 and 361–363 (GIV).

Belongs to the succinate/malate CoA ligase beta subunit family. Heterodimer of an alpha and a beta subunit. Requires Mg(2+) as cofactor.

It is found in the mitochondrion. The catalysed reaction is succinate + ATP + CoA = succinyl-CoA + ADP + phosphate. Its pathway is carbohydrate metabolism; tricarboxylic acid cycle; succinate from succinyl-CoA (ligase route): step 1/1. Functionally, succinyl-CoA synthetase functions in the citric acid cycle (TCA), coupling the hydrolysis of succinyl-CoA to the synthesis of ATP and thus represents the only step of substrate-level phosphorylation in the TCA. The beta subunit provides nucleotide specificity of the enzyme and binds the substrate succinate, while the binding sites for coenzyme A and phosphate are found in the alpha subunit. The sequence is that of Succinate--CoA ligase [ADP-forming] subunit beta, mitochondrial from Saccharomyces cerevisiae (strain ATCC 204508 / S288c) (Baker's yeast).